The following is a 174-amino-acid chain: MPGQRKLGRATDQRKAILKNLTTALFVSGRIETTEARAKEVKNIAEKLITLAIKEADNFTSKQVKVSAAKVDSKGKKLTDTKTSKNGKKYFVVEREQKTDMVSVDNASRLHARRLIMNWVYRPTTADGKNINITDKLFDEIAPKYKDKKGGYTRIYKLGPRRGDAAEMVILELV.

Belongs to the bacterial ribosomal protein bL17 family. As to quaternary structure, part of the 50S ribosomal subunit. Contacts protein L32.

The chain is Large ribosomal subunit protein bL17 from Ruminiclostridium cellulolyticum (strain ATCC 35319 / DSM 5812 / JCM 6584 / H10) (Clostridium cellulolyticum).